We begin with the raw amino-acid sequence, 510 residues long: UDP-galactopyranose mutase (510 aa).

FAD contacts are provided by T18, D38, L46, and G61. The UDP-alpha-D-galactose site is built by G61 and G62. H63 contacts FAD. 3 residues coordinate NADH: H68, R91, and S93. Positions 68, 91, 93, and 104 each coordinate NADPH. UDP-alpha-D-galactose contacts are provided by Y104, Q107, M159, Y162, N163, W167, and R182. N203 contributes to the NADPH binding site. UDP-alpha-D-galactose is bound at residue N207. V242 serves as a coordination point for FAD. 2 residues coordinate NADPH: W315 and Y317. Positions 317, 327, and 419 each coordinate UDP-alpha-D-galactose. R327 is an FAD binding site. Residues Y419 and R447 each contribute to the NADH site. 2 residues coordinate NADPH: Y419 and R447. R447 is an FAD binding site. Y453 lines the UDP-alpha-D-galactose pocket. The FAD site is built by G456, N457, and Q458. UDP-alpha-D-galactose is bound at residue N457. N457 contacts NADH. N457 provides a ligand contact to NADPH. NADPH is bound at residue H460. Position 461 (S461) interacts with FAD.

Belongs to the UDP-galactopyranose/dTDP-fucopyranose mutase family. In terms of assembly, homotetramer. FAD serves as cofactor.

It catalyses the reaction UDP-alpha-D-galactose = UDP-alpha-D-galactofuranose. Functionally, UDP-galactopyranose mutase, key flavoenzyme of galactofuranose metabolism that catalyzes the 6-to-5 ring contraction of UDP-galactopyranose to UDP-galactofuranose, the donor used by various galacto-furanosyltransferases. Controls the biosynthesis of galactomannan and galactofuranose containing glycoconjugates. The flavin functions as nucleophile, forming a flavin-sugar adduct that facilitates galactose-ring opening and contraction. The binding of UDP-galactopyranose induces profound conformational changes in the enzyme and two loops on opposite sides of the active site move toward each other by over 10 Angstroms to cover the substrate and create a closed active site. This Aspergillus fumigatus (Neosartorya fumigata) protein is UDP-galactopyranose mutase.